The primary structure comprises 365 residues: IgG receptor FcRn large subunit p51 (365 aa).

A signal peptide spans Met1–Gly23. The interval Ala24–Pro110 is alpha-1. Residues Ala24–Ser297 are Extracellular-facing. Positions Tyr111–Lys200 are alpha-2. 2 cysteine pairs are disulfide-bonded: Cys119–Cys182 and Cys221–Cys275. Asn125 carries an N-linked (GlcNAc...) asparagine glycan. Residues Glu201 to Leu290 form an alpha-3 region. The 88-residue stretch at Pro202–Glu289 folds into the Ig-like C1-type domain. Residues Glu291–Ser297 form a connecting peptide region. The helical transmembrane segment at Val298–Trp321 threads the bilayer. Topologically, residues Arg322–Ala365 are cytoplasmic. Ser334 carries the phosphoserine modification.

The protein belongs to the immunoglobulin superfamily. FcRn complex consists of two subunits: p51, and p14 which is equivalent to beta-2-microglobulin. It forms an MHC class I-like heterodimer. Interacts with albumin/ALB; this interaction regulates ALB homeostasis. In terms of assembly, (Microbial infection) Interacts with Echovirus 6, Echovirus 11 and Echovirus 30 capsid protein VP1. Expressed in full-term placenta, heart, lung, liver, muscle, kidney, pancreas, and both fetal and adult small intestine.

The protein resides in the cell membrane. It localises to the endosome membrane. In terms of biological role, cell surface receptor that transfers passive humoral immunity from the mother to the newborn. Binds to the Fc region of monomeric immunoglobulin gamma and mediates its selective uptake from milk. IgG in the milk is bound at the apical surface of the intestinal epithelium. The resultant FcRn-IgG complexes are transcytosed across the intestinal epithelium and IgG is released from FcRn into blood or tissue fluids. Throughout life, contributes to effective humoral immunity by recycling IgG and extending its half-life in the circulation. Mechanistically, monomeric IgG binding to FcRn in acidic endosomes of endothelial and hematopoietic cells recycles IgG to the cell surface where it is released into the circulation. In addition of IgG, regulates homeostasis of the other most abundant circulating protein albumin/ALB. Functionally, (Microbial infection) Acts as an uncoating receptor for a panel of echoviruses including Echovirus 5, 6, 7, 9, 11, 13, 25 and 29. The sequence is that of IgG receptor FcRn large subunit p51 (FCGRT) from Homo sapiens (Human).